We begin with the raw amino-acid sequence, 259 residues long: Cytochrome c oxidase subunit 3 (259 aa).

7 consecutive transmembrane segments (helical) span residues 13–33 (PWPL…TSWF), 36–56 (HGFI…FQWW), 80–100 (GMVL…WAYF), 125–145 (FQIP…VTWA), 154–174 (HAEA…FTLL), 195–215 (FFVA…FLLI), and 237–257 (AWYW…IYWW).

It belongs to the cytochrome c oxidase subunit 3 family. Component of the cytochrome c oxidase (complex IV, CIV), a multisubunit enzyme composed of a catalytic core of 3 subunits and several supernumerary subunits. The complex exists as a monomer or a dimer and forms supercomplexes (SCs) in the inner mitochondrial membrane with ubiquinol-cytochrome c oxidoreductase (cytochrome b-c1 complex, complex III, CIII).

Its subcellular location is the mitochondrion inner membrane. It catalyses the reaction 4 Fe(II)-[cytochrome c] + O2 + 8 H(+)(in) = 4 Fe(III)-[cytochrome c] + 2 H2O + 4 H(+)(out). Component of the cytochrome c oxidase, the last enzyme in the mitochondrial electron transport chain which drives oxidative phosphorylation. The respiratory chain contains 3 multisubunit complexes succinate dehydrogenase (complex II, CII), ubiquinol-cytochrome c oxidoreductase (cytochrome b-c1 complex, complex III, CIII) and cytochrome c oxidase (complex IV, CIV), that cooperate to transfer electrons derived from NADH and succinate to molecular oxygen, creating an electrochemical gradient over the inner membrane that drives transmembrane transport and the ATP synthase. Cytochrome c oxidase is the component of the respiratory chain that catalyzes the reduction of oxygen to water. Electrons originating from reduced cytochrome c in the intermembrane space (IMS) are transferred via the dinuclear copper A center (CU(A)) of subunit 2 and heme A of subunit 1 to the active site in subunit 1, a binuclear center (BNC) formed by heme A3 and copper B (CU(B)). The BNC reduces molecular oxygen to 2 water molecules using 4 electrons from cytochrome c in the IMS and 4 protons from the mitochondrial matrix. In Heterololigo bleekeri (Spear squid), this protein is Cytochrome c oxidase subunit 3 (COIII).